A 271-amino-acid chain; its full sequence is Hydroxyethylthiazole kinase (271 aa).

Met46 lines the substrate pocket. 2 residues coordinate ATP: Arg122 and Thr169. A substrate-binding site is contributed by Gly196.

Belongs to the Thz kinase family. Mg(2+) is required as a cofactor.

It carries out the reaction 5-(2-hydroxyethyl)-4-methylthiazole + ATP = 4-methyl-5-(2-phosphooxyethyl)-thiazole + ADP + H(+). It functions in the pathway cofactor biosynthesis; thiamine diphosphate biosynthesis; 4-methyl-5-(2-phosphoethyl)-thiazole from 5-(2-hydroxyethyl)-4-methylthiazole: step 1/1. Functionally, catalyzes the phosphorylation of the hydroxyl group of 4-methyl-5-beta-hydroxyethylthiazole (THZ). The protein is Hydroxyethylthiazole kinase of Alkaliphilus oremlandii (strain OhILAs) (Clostridium oremlandii (strain OhILAs)).